The chain runs to 105 residues: Serine protease inhibitor Kazal-type 6 (105 aa).

Residues 1–23 (MKVAGVFLLLSLALLCFFSGEFS) form the signal peptide. Position 24 is a pyrrolidone carboxylic acid (Q24). A Kazal-like domain is found at 49-105 (RLFQINCGEFRDPKVFCTRESDPLCGSDGQTYGNKCAFCKALEKSSGKINLKHRGKC). 3 disulfides stabilise this stretch: C55/C87, C65/C84, and C73/C105.

The protein localises to the secreted. Functionally, serine protease inhibitor selective for kallikreins. Efficiently inhibits KLK4, KLK5, KLK6, KLK7, KLK12, KLK13 and KLK14. Doesn't inhibit KLK8. The protein is Serine protease inhibitor Kazal-type 6 (Spink6) of Rattus norvegicus (Rat).